A 555-amino-acid polypeptide reads, in one-letter code: 1,3-beta-glucanosyltransferase GAS2 (555 aa).

A signal peptide spans 1–24 (MNKKQNFYAAIIVAIFLCLQLSHG). C89 and C118 form a disulfide bridge. (1,3-beta-D-glucosyl)n is bound by residues Y107, 134–142 (SEPDISINR), N175, E176, D217, and R222. The active-site Proton donor is the E176. Cystine bridges form between C231/C367, C247/C278, C390/C442, C392/C489, C399/C466, and C419/C424. E275 (nucleophile) is an active-site residue. (1,3-beta-D-glucosyl)n is bound at residue Y307. The N-linked (GlcNAc...) asparagine glycan is linked to N498. A lipid anchor (GPI-anchor amidated aspartate) is attached at D531. Residues 532-555 (GTIAFKTSGFVILLISMIAAGILL) constitute a propeptide, removed in mature form.

The protein belongs to the glycosyl hydrolase 72 family. Post-translationally, N-glycosylated.

The protein resides in the cell membrane. Functionally, splits internally a 1,3-beta-glucan molecule and transfers the newly generated reducing end (the donor) to the non-reducing end of another 1,3-beta-glucan molecule (the acceptor) forming a 1,3-beta linkage, resulting in the elongation of 1,3-beta-glucan chains in the cell wall. Involved in spore wall assembly. The sequence is that of 1,3-beta-glucanosyltransferase GAS2 (GAS2) from Saccharomyces cerevisiae (strain ATCC 204508 / S288c) (Baker's yeast).